The sequence spans 223 residues: Pre-hexon-linking protein VIII (223 aa).

T64 bears the Phosphothreonine; by host mark. Residues 112–153 (GALAPRDLYALTLRGRGIQLNEDLPLSASTLRPDGIFQLGGG) constitute a propeptide that is removed on maturation. S170 carries the post-translational modification Phosphoserine; by host.

It belongs to the adenoviridae hexon-linking protein family. In terms of assembly, interacts with the peripentonal hexons as well as the hexons in the facets. Part of a complex composed of the core-capsid bridging protein, the endosome lysis protein VI and the hexon-linking protein VIII; these interactions bridge the virus core to the capsid. In terms of processing, cleaved by the viral protease during virion maturation. May cause the middle segment to be shed from the capsid.

It localises to the virion. It is found in the host nucleus. Functionally, structural component of the virion that acts as a cement protein on the capsid interior and which glue the peripentonal hexons and group-of-nine hexons together. This is Pre-hexon-linking protein VIII from Porcine adenovirus A serotype 3 (PAdV-3).